The following is a 60-amino-acid chain: Putative transmembrane protein 74 (60 aa).

A run of 2 helical transmembrane segments spans residues 4–24 (FSVI…FLTF) and 35–55 (WVYI…YQAG).

The protein localises to the host membrane. This Sulfolobus islandicus filamentous virus (isolate Iceland/Hveragerdi) (SIFV) protein is Putative transmembrane protein 74 (SIFV0074).